Reading from the N-terminus, the 394-residue chain is NAD(P)H-quinone oxidoreductase subunit H (394 aa).

It belongs to the complex I 49 kDa subunit family. NDH-1 can be composed of about 15 different subunits; different subcomplexes with different compositions have been identified which probably have different functions.

The protein localises to the cellular thylakoid membrane. The catalysed reaction is a plastoquinone + NADH + (n+1) H(+)(in) = a plastoquinol + NAD(+) + n H(+)(out). It catalyses the reaction a plastoquinone + NADPH + (n+1) H(+)(in) = a plastoquinol + NADP(+) + n H(+)(out). Its function is as follows. NDH-1 shuttles electrons from an unknown electron donor, via FMN and iron-sulfur (Fe-S) centers, to quinones in the respiratory and/or the photosynthetic chain. The immediate electron acceptor for the enzyme in this species is believed to be plastoquinone. Couples the redox reaction to proton translocation, and thus conserves the redox energy in a proton gradient. Cyanobacterial NDH-1 also plays a role in inorganic carbon-concentration. In Nostoc punctiforme (strain ATCC 29133 / PCC 73102), this protein is NAD(P)H-quinone oxidoreductase subunit H.